We begin with the raw amino-acid sequence, 383 residues long: Sterol 24-C-methyltransferase ERG6 (383 aa).

Ser2 carries the N-acetylserine modification. Ser99 is subject to Phosphoserine.

The protein belongs to the class I-like SAM-binding methyltransferase superfamily. Erg6/SMT family. Interacts with ERG28.

Its subcellular location is the microsome. The protein localises to the mitochondrion. The enzyme catalyses zymosterol + S-adenosyl-L-methionine = fecosterol + S-adenosyl-L-homocysteine + H(+). The protein operates within steroid metabolism; ergosterol biosynthesis; ergosterol from zymosterol: step 1/5. Its function is as follows. Sterol 24-C-methyltransferase; part of the third module of ergosterol biosynthesis pathway that includes the late steps of the pathway. ERG6 catalyzes the methyl transfer from S-adenosyl-methionine to the C-24 of zymosterol to form fecosterol. The third module or late pathway involves the ergosterol synthesis itself through consecutive reactions that mainly occur in the endoplasmic reticulum (ER) membrane. Firstly, the squalene synthase ERG9 catalyzes the condensation of 2 farnesyl pyrophosphate moieties to form squalene, which is the precursor of all steroids. Squalene synthase is crucial for balancing the incorporation of farnesyl diphosphate (FPP) into sterol and nonsterol isoprene synthesis. Secondly, the squalene epoxidase ERG1 catalyzes the stereospecific oxidation of squalene to (S)-2,3-epoxysqualene, which is considered to be a rate-limiting enzyme in steroid biosynthesis. Then, the lanosterol synthase ERG7 catalyzes the cyclization of (S)-2,3 oxidosqualene to lanosterol, a reaction that forms the sterol core. In the next steps, lanosterol is transformed to zymosterol through a complex process involving various demethylation, reduction and desaturation reactions. The lanosterol 14-alpha-demethylase ERG11 (also known as CYP51) catalyzes C14-demethylation of lanosterol to produce 4,4'-dimethyl cholesta-8,14,24-triene-3-beta-ol, which is critical for ergosterol biosynthesis. The C-14 reductase ERG24 reduces the C14=C15 double bond of 4,4-dimethyl-cholesta-8,14,24-trienol to produce 4,4-dimethyl-cholesta-8,24-dienol. 4,4-dimethyl-cholesta-8,24-dienol is substrate of the C-4 demethylation complex ERG25-ERG26-ERG27 in which ERG25 catalyzes the three-step monooxygenation required for the demethylation of 4,4-dimethyl and 4alpha-methylsterols, ERG26 catalyzes the oxidative decarboxylation that results in a reduction of the 3-beta-hydroxy group at the C-3 carbon to an oxo group, and ERG27 is responsible for the reduction of the keto group on the C-3. ERG28 has a role as a scaffold to help anchor ERG25, ERG26 and ERG27 to the endoplasmic reticulum and ERG29 regulates the activity of the iron-containing C4-methylsterol oxidase ERG25. Then, the sterol 24-C-methyltransferase ERG6 catalyzes the methyl transfer from S-adenosyl-methionine to the C-24 of zymosterol to form fecosterol. The C-8 sterol isomerase ERG2 catalyzes the reaction which results in unsaturation at C-7 in the B ring of sterols and thus converts fecosterol to episterol. The sterol-C5-desaturase ERG3 then catalyzes the introduction of a C-5 double bond in the B ring to produce 5-dehydroepisterol. The C-22 sterol desaturase ERG5 further converts 5-dehydroepisterol into ergosta-5,7,22,24(28)-tetraen-3beta-ol by forming the C-22(23) double bond in the sterol side chain. Finally, ergosta-5,7,22,24(28)-tetraen-3beta-ol is substrate of the C-24(28) sterol reductase ERG4 to produce ergosterol. This is Sterol 24-C-methyltransferase ERG6 from Saccharomyces cerevisiae (strain ATCC 204508 / S288c) (Baker's yeast).